The chain runs to 456 residues: Putrescine--pyruvate aminotransferase (456 aa).

Y156 provides a ligand contact to substrate. D262 serves as a coordination point for pyridoxal 5'-phosphate. K291 carries the N6-(pyridoxal phosphate)lysine modification. Positions 322 and 417 each coordinate substrate.

It belongs to the class-III pyridoxal-phosphate-dependent aminotransferase family. The cofactor is pyridoxal 5'-phosphate.

It catalyses the reaction putrescine + pyruvate = 4-aminobutanal + L-alanine. It participates in amine and polyamine degradation; putrescine degradation; 4-aminobutanal from putrescine (transaminase route). In terms of biological role, involved in the putrescine catabolism. Catalyzes the transfer of the amino group from putrescine to pyruvate to yield 4-aminobutanal and alanine. In Pseudomonas aeruginosa (strain ATCC 15692 / DSM 22644 / CIP 104116 / JCM 14847 / LMG 12228 / 1C / PRS 101 / PAO1), this protein is Putrescine--pyruvate aminotransferase.